The primary structure comprises 255 residues: Hydroxyacylglutathione hydrolase (255 aa).

Positions 56, 58, 60, 61, 114, 133, and 171 each coordinate Zn(2+).

The protein belongs to the metallo-beta-lactamase superfamily. Glyoxalase II family. In terms of assembly, monomer. It depends on Zn(2+) as a cofactor.

The catalysed reaction is an S-(2-hydroxyacyl)glutathione + H2O = a 2-hydroxy carboxylate + glutathione + H(+). It participates in secondary metabolite metabolism; methylglyoxal degradation; (R)-lactate from methylglyoxal: step 2/2. Functionally, thiolesterase that catalyzes the hydrolysis of S-D-lactoyl-glutathione to form glutathione and D-lactic acid. The protein is Hydroxyacylglutathione hydrolase of Chelativorans sp. (strain BNC1).